We begin with the raw amino-acid sequence, 511 residues long: Histidine ammonia-lyase (511 aa).

Positions 142-144 (ASG) form a cross-link, 5-imidazolinone (Ala-Gly). Residue S143 is modified to 2,3-didehydroalanine (Ser).

Belongs to the PAL/histidase family. Post-translationally, contains an active site 4-methylidene-imidazol-5-one (MIO), which is formed autocatalytically by cyclization and dehydration of residues Ala-Ser-Gly.

The protein localises to the cytoplasm. It catalyses the reaction L-histidine = trans-urocanate + NH4(+). The protein operates within amino-acid degradation; L-histidine degradation into L-glutamate; N-formimidoyl-L-glutamate from L-histidine: step 1/3. In Brucella anthropi (strain ATCC 49188 / DSM 6882 / CCUG 24695 / JCM 21032 / LMG 3331 / NBRC 15819 / NCTC 12168 / Alc 37) (Ochrobactrum anthropi), this protein is Histidine ammonia-lyase.